Consider the following 124-residue polypeptide: MQKKLVVEKVEKRDERLWLICDHPPFSLEQARPKNHMLVDSDNIAFIYILETDEDFIYVAIPSEFWMDIKQVLTDGTPIFLQSGTIEMELTHFKEELTYLIENIDGNANYGEQMEQAVKEIFLT.

It belongs to the UPF0738 family.

This chain is UPF0738 protein GWCH70_0774, found in Geobacillus sp. (strain WCH70).